The primary structure comprises 350 residues: Biotin synthase (350 aa).

The span at 1-13 (MVTQAATRPSNDA) shows a compositional bias: polar residues. A disordered region spans residues 1–20 (MVTQAATRPSNDAGQDGVTE). Residues 71–296 (PEVEVEGIIS…RTMLRFAGGR (226 aa)) enclose the Radical SAM core domain. C86, C90, and C93 together coordinate [4Fe-4S] cluster. 4 residues coordinate [2Fe-2S] cluster: C129, C162, C221, and R291.

The protein belongs to the radical SAM superfamily. Biotin synthase family. As to quaternary structure, homodimer. Requires [4Fe-4S] cluster as cofactor. [2Fe-2S] cluster serves as cofactor.

It catalyses the reaction (4R,5S)-dethiobiotin + (sulfur carrier)-SH + 2 reduced [2Fe-2S]-[ferredoxin] + 2 S-adenosyl-L-methionine = (sulfur carrier)-H + biotin + 2 5'-deoxyadenosine + 2 L-methionine + 2 oxidized [2Fe-2S]-[ferredoxin]. The protein operates within cofactor biosynthesis; biotin biosynthesis; biotin from 7,8-diaminononanoate: step 2/2. Catalyzes the conversion of dethiobiotin (DTB) to biotin by the insertion of a sulfur atom into dethiobiotin via a radical-based mechanism. In Mycobacterium ulcerans (strain Agy99), this protein is Biotin synthase.